The following is a 365-amino-acid chain: tRNA/tmRNA (uracil-C(5))-methyltransferase (365 aa).

5 residues coordinate S-adenosyl-L-methionine: glutamine 189, tyrosine 217, asparagine 222, glutamate 238, and aspartate 298. The active-site Nucleophile is the cysteine 323. Residue glutamate 357 is the Proton acceptor of the active site.

Belongs to the class I-like SAM-binding methyltransferase superfamily. RNA M5U methyltransferase family. TrmA subfamily.

It carries out the reaction uridine(54) in tRNA + S-adenosyl-L-methionine = 5-methyluridine(54) in tRNA + S-adenosyl-L-homocysteine + H(+). The catalysed reaction is uridine(341) in tmRNA + S-adenosyl-L-methionine = 5-methyluridine(341) in tmRNA + S-adenosyl-L-homocysteine + H(+). In terms of biological role, dual-specificity methyltransferase that catalyzes the formation of 5-methyluridine at position 54 (m5U54) in all tRNAs, and that of position 341 (m5U341) in tmRNA (transfer-mRNA). This is tRNA/tmRNA (uracil-C(5))-methyltransferase from Shewanella sediminis (strain HAW-EB3).